A 208-amino-acid polypeptide reads, in one-letter code: Small ribosomal subunit protein uS4 (208 aa).

Residues 98-158 (GRLDNVVYRM…EKSKKQARIK (61 aa)) form the S4 RNA-binding domain.

This sequence belongs to the universal ribosomal protein uS4 family. As to quaternary structure, part of the 30S ribosomal subunit. Contacts protein S5. The interaction surface between S4 and S5 is involved in control of translational fidelity.

Functionally, one of the primary rRNA binding proteins, it binds directly to 16S rRNA where it nucleates assembly of the body of the 30S subunit. With S5 and S12 plays an important role in translational accuracy. This chain is Small ribosomal subunit protein uS4, found in Actinobacillus pleuropneumoniae serotype 5b (strain L20).